We begin with the raw amino-acid sequence, 388 residues long: Pyruvate dehydrogenase E1 component subunit alpha, testis-specific form, mitochondrial (388 aa).

The N-terminal 27 residues, 1–27 (MLAAFISRVLRRVAQKSARRVLVASRN), are a transit peptide targeting the mitochondrion. Pyruvate-binding residues include His90, Tyr116, Arg117, Gly163, Val165, Asp194, Gly195, Ala196, Asn223, and Tyr225. Thiamine diphosphate contacts are provided by Tyr116, Arg117, Gly163, Val165, Asp194, Gly195, Ala196, and Asn223. Residue Asp194 participates in Mg(2+) binding. The Mg(2+) site is built by Asn223 and Tyr225. Thiamine diphosphate is bound at residue His290. Position 291 is a phosphoserine; by PDK1, PDK2, PDK3 and PDK4 (Ser291). Ser293 is modified (phosphoserine). Ser298 carries the phosphoserine; by PDK3 modification.

In terms of assembly, heterotetramer of two PDHA2 and two PDHB subunits. The heterotetramer interacts with DLAT, and is part of the multimeric pyruvate dehydrogenase complex that contains multiple copies of pyruvate dehydrogenase (E1), dihydrolipoamide acetyltransferase (DLAT, E2) and lipoamide dehydrogenase (DLD, E3). These subunits are bound to an inner core composed of about 48 DLAT and 12 PDHX molecules. The cofactor is thiamine diphosphate. It depends on Mg(2+) as a cofactor. Phosphorylation at Ser-291, Ser-293 and Ser-298 by PDK family kinases inactivates the enzyme; for this phosphorylation at a single site is sufficient. Phosphorylation at Ser-293 interferes with access to active site, and thereby inactivates the enzyme. Dephosphorylation at all three sites, i.e. at Ser-291, Ser-293 and Ser-298, is required for reactivation. In terms of tissue distribution, testis. Expressed in postmeiotic spermatogenic cells.

It localises to the mitochondrion matrix. The enzyme catalyses N(6)-[(R)-lipoyl]-L-lysyl-[protein] + pyruvate + H(+) = N(6)-[(R)-S(8)-acetyldihydrolipoyl]-L-lysyl-[protein] + CO2. With respect to regulation, pyruvate dehydrogenase activity is inhibited by phosphorylation of PDHA2; it is reactivated by dephosphorylation. Its function is as follows. The pyruvate dehydrogenase complex catalyzes the overall conversion of pyruvate to acetyl-CoA and CO(2), and thereby links the glycolytic pathway to the tricarboxylic cycle. The sequence is that of Pyruvate dehydrogenase E1 component subunit alpha, testis-specific form, mitochondrial (PDHA2) from Homo sapiens (Human).